A 623-amino-acid polypeptide reads, in one-letter code: Quinoprotein ethanol dehydrogenase (623 aa).

An N-terminal signal peptide occupies residues Met1 to Ala34. 3 residues coordinate Ca(2+): Asp45, Thr48, and Asp51. Glu95 lines the pyrroloquinoline quinone pocket. A disulfide bridge connects residues Cys139 and Cys140. Residues Arg145, Thr189, and His207–Ser209 contribute to the pyrroloquinoline quinone site. Glu213 provides a ligand contact to Ca(2+). Residues Leu244–Pro281 form a disordered region. 2 residues coordinate Ca(2+): Asn300 and Asp350. Asp350 functions as the Proton acceptor in the catalytic mechanism. Arg378 contacts pyrroloquinoline quinone. The disordered stretch occupies residues Gly413–Lys434. Pyrroloquinoline quinone-binding residues include Trp523 and Ala587.

Belongs to the bacterial PQQ dehydrogenase family. Homodimer. Interacts with cytochrome c550. It depends on pyrroloquinoline quinone as a cofactor. Requires Ca(2+) as cofactor. Post-translationally, the disulfide ring formed between the two adjacent cysteine residues Cys-139 and Cys-140 is essential for efficient electron transfer at pH 7 from QEDH to its natural electron acceptor cytochrome c550.

It is found in the periplasm. The catalysed reaction is a primary alcohol + 2 Fe(III)-[cytochrome c] = an aldehyde + 2 Fe(II)-[cytochrome c] + 2 H(+). It carries out the reaction ethanol + 2 Fe(III)-[cytochrome c] = acetaldehyde + 2 Fe(II)-[cytochrome c] + 2 H(+). The enzyme catalyses butan-1-ol + 2 Fe(III)-[cytochrome c] = butanal + 2 Fe(II)-[cytochrome c] + 2 H(+). It catalyses the reaction propan-2-ol + 2 Fe(III)-[cytochrome c] = acetone + 2 Fe(II)-[cytochrome c] + 2 H(+). The catalysed reaction is 1-propanol + 2 Fe(III)-[cytochrome c] = propanal + 2 Fe(II)-[cytochrome c] + 2 H(+). The protein operates within alcohol metabolism; ethanol degradation; acetate from ethanol: step 1/2. Inhibited by cyclopropanone ethylhemiketal. Activated by ammonia (500mM), methylamine (5mM), ethylamine (5mM), octylamine (5mM), ethanolamine (5mM) and 1-amino-2-propanol (5mM), in assays using artificial electron acceptors. Ammonia is not needed for, nor does it stimulate, the ethanol-oxidizing activity when using the natural electron acceptor cytochrome c550. Catalyzes the oxidation of ethanol and other primary alcohols to the corresponding aldehydes, except methanol, which is a very poor substrate. Uses a specific inducible cytochrome c550, encoded by the adjacent gene in the locus, as electron acceptor. Is a key enzyme of the carbon and energy metabolism during growth of P.aeruginosa on ethanol as the sole carbon and energy source. Is also able to use secondary alcohols as well as aminoalcohols like ethanolamine and 1-amino-2-propanol, and aldehydes as substrates. This is Quinoprotein ethanol dehydrogenase from Pseudomonas aeruginosa (strain ATCC 15692 / DSM 22644 / CIP 104116 / JCM 14847 / LMG 12228 / 1C / PRS 101 / PAO1).